The chain runs to 148 residues: Cell division protein SepF (148 aa).

The tract at residues 1–59 (MNNKFKDFFGFGDNDSYEERDAYEEHYDEQEEMQNSNRPTNSRDSNVVSIKAGQAGSGP) is disordered. The span at 33–48 (MQNSNRPTNSRDSNVV) shows a compositional bias: polar residues.

The protein belongs to the SepF family. Homodimer. Interacts with FtsZ.

It localises to the cytoplasm. Its function is as follows. Cell division protein that is part of the divisome complex and is recruited early to the Z-ring. Probably stimulates Z-ring formation, perhaps through the cross-linking of FtsZ protofilaments. Its function overlaps with FtsA. In Lactobacillus delbrueckii subsp. bulgaricus (strain ATCC BAA-365 / Lb-18), this protein is Cell division protein SepF.